Consider the following 226-residue polypeptide: Cytochrome c-553I (226 aa).

The signal sequence occupies residues 1 to 22 (MTSKTTASLLAICVACAASAIA). The disordered stretch occupies residues 43-68 (AAVSGDAHEQPAAEAPAEEEEETPAV). Cys-125, Cys-128, His-129, and Met-173 together coordinate heme. Residues 203-226 (RGRPAKREDKSDEFVAQEDSCMSG) are disordered.

Binds 1 heme group per subunit.

Its subcellular location is the periplasm. The protein is Cytochrome c-553I (cycB) of Paracoccus denitrificans.